Reading from the N-terminus, the 195-residue chain is Small ribosomal subunit protein uS4B (195 aa).

One can recognise an S4 RNA-binding domain in the interval 107–181 (RRLQTQVYKL…VARRNAARKA (75 aa)). A disordered region spans residues 161–195 (TSPFGGARPGRVARRNAARKAEASGEAAEEAEDEE). A Glycyl lysine isopeptide (Lys-Gly) (interchain with G-Cter in ubiquitin) cross-link involves residue lysine 180. Serine 184 is subject to Phosphoserine.

It belongs to the universal ribosomal protein uS4 family. As to quaternary structure, component of the small ribosomal subunit (SSU). Mature yeast ribosomes consist of a small (40S) and a large (60S) subunit. The 40S small subunit contains 1 molecule of ribosomal RNA (18S rRNA) and 33 different proteins (encoded by 57 genes). The large 60S subunit contains 3 rRNA molecules (25S, 5.8S and 5S rRNA) and 46 different proteins (encoded by 81 genes). Interacts with snoRNA U3. uS11 interacts with MPP10. Component of the ribosomal small subunit (SSU) processome composed of at least 40 protein subunits and snoRNA U3.

Its subcellular location is the cytoplasm. The protein resides in the nucleus. It is found in the nucleolus. Its function is as follows. Component of the ribosome, a large ribonucleoprotein complex responsible for the synthesis of proteins in the cell. The small ribosomal subunit (SSU) binds messenger RNAs (mRNAs) and translates the encoded message by selecting cognate aminoacyl-transfer RNA (tRNA) molecules. The large subunit (LSU) contains the ribosomal catalytic site termed the peptidyl transferase center (PTC), which catalyzes the formation of peptide bonds, thereby polymerizing the amino acids delivered by tRNAs into a polypeptide chain. The nascent polypeptides leave the ribosome through a tunnel in the LSU and interact with protein factors that function in enzymatic processing, targeting, and the membrane insertion of nascent chains at the exit of the ribosomal tunnel. uS4 is involved in nucleolar processing of pre-18S ribosomal RNA and ribosome assembly. In Saccharomyces cerevisiae (strain ATCC 204508 / S288c) (Baker's yeast), this protein is Small ribosomal subunit protein uS4B.